The following is a 516-amino-acid chain: 2,3-bisphosphoglycerate-independent phosphoglycerate mutase (516 aa).

Mn(2+) contacts are provided by Asp15 and Ser65. The Phosphoserine intermediate role is filled by Ser65. Substrate is bound by residues His126, 156-157, Arg188, Arg194, 263-266, and Lys336; these read RD and RADR. Mn(2+) contacts are provided by Asp403, His407, Asp444, His445, and His463.

It belongs to the BPG-independent phosphoglycerate mutase family. Monomer. The cofactor is Mn(2+).

It carries out the reaction (2R)-2-phosphoglycerate = (2R)-3-phosphoglycerate. Its pathway is carbohydrate degradation; glycolysis; pyruvate from D-glyceraldehyde 3-phosphate: step 3/5. Functionally, catalyzes the interconversion of 2-phosphoglycerate and 3-phosphoglycerate. The protein is 2,3-bisphosphoglycerate-independent phosphoglycerate mutase of Francisella tularensis subsp. holarctica (strain OSU18).